The chain runs to 335 residues: MAEIYDFDKSAWDVKGSIAPIRPKTYSDGRLIPQVRVIDPGFGDRKDECFMYIFLLGIVEDSDPLSPPRGRTFGSLPLGVGKSTAKPEELLKEVTDLDIVVRRTAGLNEKLVFYNNTPLSLLTPWKKILTTGSVFNANQVCNAVNMIPLDTPQRFRVVYMSITRLSDSGYYTVPRKMLEFRSANAVAFNLLVTLEIDRDTEPGRPAAGGLGLSEATFMVHVGNFRRKKNEAYSADYCKMKIEKMGLVFALGGIGGTSLHIRSTGKMSKTLHAQLGFKKTLCYPLMDINEDLNRLLWRSRCKIVRIQAVLQPSVPQEFRIYDDVIINDDQGLFKVL.

Belongs to the morbillivirus/respirovirus/rubulavirus M protein family.

The protein localises to the virion. In terms of biological role, the M protein has a crucial role in virus assembly and interacts with the RNP complex as well as with the viral membrane. The protein is Matrix protein (M) of Bos indicus (Zebu).